A 628-amino-acid chain; its full sequence is Somatic embryogenesis receptor kinase 2 (628 aa).

A signal peptide spans 1-29; the sequence is MGRKKFEAFGFVCLISLLLLFNSLWLASS. Residues 30–241 are Extracellular-facing; the sequence is NMEGDALHSL…PTPGGYSATG (212 aa). The interval 45–85 is PSKR1 binding; sequence DPNNVLQSWDPTLVNPCTWFHVTCNNENSVIRVDLGNADLS. The tract at residues 56–58 is CLE44 binding; sequence TLV. A disulfide bridge links Cys61 with Cys68. Leucine-rich repeat receptor-like protein kinase binding regions lie at residues 62-81 and 100-105; these read TWFHVTCNNENSVIRVDLGN and YLELYS. 64-65 is a brassinolide binding site; the sequence is FH. LRR repeat units follow at residues 95-119, 121-143, 144-167, and 168-192; these read LKNLQYLELYSNNITGPVPSDLGNL, NLVSLDLYLNSFTGPIPDSLGKL, FKLRFLRLNNNSLTGPIPMSLTNI, and MTLQVLDLSNNRLSGSVPDNGSFSL. N-linked (GlcNAc...) asparagine glycosylation is found at Asn107 and Asn118. Leucine-rich repeat receptor-like protein kinase binding stretches follow at residues 126 to 129 and 148 to 150; these read DLYL and FLR. Residues Asn153 and Asn187 are each glycosylated (N-linked (GlcNAc...) asparagine). Residues 174–197 are leucine-rich repeat receptor-like protein kinase binding; the sequence is DLSNNRLSGSVPDNGSFSLFTPIS. Cys205 and Cys213 are joined by a disulfide. Residues 242 to 262 form a helical membrane-spanning segment; the sequence is AIAGGVAAGAALLFAAPALAF. Residues 263-628 lie on the Cytoplasmic side of the membrane; that stretch reads AWWRRRKPQE…LHAMELSGPR (366 aa). Phosphothreonine is present on Thr302. Residues 305 to 592 form the Protein kinase domain; that stretch reads FSNKNILGRG…GLAEKWDEWQ (288 aa). 311 to 319 contributes to the ATP binding site; it reads LGRGGFGKV. Thr328 bears the Phosphothreonine mark. Lys333 is an ATP binding site. 2 positions are modified to phosphoserine: Ser386 and Ser389. Residue Asp432 is the Proton acceptor of the active site. A phosphothreonine mark is found at Thr462, Thr465, Thr466, and Thr471. Tyr479 carries the post-translational modification Phosphotyrosine. Ser481 is modified (phosphoserine). Thr482 is subject to Phosphothreonine. Residue Ser486 is modified to Phosphoserine. Residue Thr562 is modified to Phosphothreonine. Phosphoserine is present on Ser604. Thr616 carries the phosphothreonine modification. Ser625 is subject to Phosphoserine.

The protein belongs to the protein kinase superfamily. Ser/Thr protein kinase family. As to quaternary structure, homo- and heterodimer. Component of the SERK1 signaling complex, composed of KAPP, CDC48A, GRF6 or GRF7, SERK1, SERK2, SERK3/BAK1 and BRI1. Bind to BRI1 in a brassinolide-dependent manner. Heterodimer with PSKR1. Interacts with the EF-Tu receptor EFR and FLS2 in a specific ligand-induced manner. Interacts with ERECTA in a EPF2-induced manner. Interacts with ERL1 in a EPF1-induced manner. Interacts with TMM. In the presence of the signal peptide RGF1, interacts with RGI3/RGFR1 and RGI4/RGFR2/SKM2. Binds to the peptide CLE44 in the presence of TDR. Post-translationally, autophosphorylated. As to expression, expressed in flowers, tapetum, developing microspores, all cells of the embryo sac, provascular strands and developing vascular bundles. Low expression in adult vascular tissue.

It localises to the cell membrane. The catalysed reaction is L-seryl-[protein] + ATP = O-phospho-L-seryl-[protein] + ADP + H(+). It catalyses the reaction L-threonyl-[protein] + ATP = O-phospho-L-threonyl-[protein] + ADP + H(+). In terms of biological role, serine/threonine-kinase involved in brassinosteroid-dependent and -independent signaling pathways. Acts redundantly with SERK1 as a control point for sporophytic development controlling male gametophyte production. Serves as coreceptor to small peptide (e.g. RGF1 and CLE44) signaling. Involved in the perception of phytosulfokine and subsequent signal transduction. In Arabidopsis thaliana (Mouse-ear cress), this protein is Somatic embryogenesis receptor kinase 2.